We begin with the raw amino-acid sequence, 342 residues long: Galactose mutarotase (342 aa).

Phosphoserine is present on serine 14. Beta-D-galactose contacts are provided by residues 81 to 82 (NR), histidine 107, 176 to 178 (HSY), aspartate 243, glutamine 279, and glutamate 307. The Proton donor role is filled by histidine 176. Glutamate 307 (proton acceptor) is an active-site residue.

It belongs to the aldose epimerase family. As to quaternary structure, monomer.

The protein resides in the cytoplasm. The catalysed reaction is alpha-D-galactose = beta-D-galactose. The enzyme catalyses alpha-D-glucose = beta-D-glucose. It participates in carbohydrate metabolism; hexose metabolism. The protein operates within carbohydrate metabolism; galactose metabolism. In terms of biological role, mutarotase that catalyzes the interconversion of beta-D-galactose and alpha-D-galactose during galactose metabolism. Beta-D-galactose is metabolized in the liver into glucose 1-phosphate, the primary metabolic fuel, by the action of four enzymes that constitute the Leloir pathway: GALM, GALK1 (galactokinase), GALT (galactose-1-phosphate uridylyltransferase) and GALE (UDP-galactose-4'-epimerase). Involved in the maintenance of the equilibrium between the beta- and alpha-anomers of galactose, therefore ensuring a sufficient supply of the alpha-anomer for GALK1. Also active on D-glucose although shows a preference for galactose over glucose. This chain is Galactose mutarotase, found in Mus musculus (Mouse).